Here is a 148-residue protein sequence, read N- to C-terminus: D-aminoacyl-tRNA deacylase (148 aa).

The Gly-cisPro motif, important for rejection of L-amino acids signature appears at 137–138; it reads GP.

This sequence belongs to the DTD family. Homodimer.

Its subcellular location is the cytoplasm. The catalysed reaction is glycyl-tRNA(Ala) + H2O = tRNA(Ala) + glycine + H(+). It carries out the reaction a D-aminoacyl-tRNA + H2O = a tRNA + a D-alpha-amino acid + H(+). An aminoacyl-tRNA editing enzyme that deacylates mischarged D-aminoacyl-tRNAs. Also deacylates mischarged glycyl-tRNA(Ala), protecting cells against glycine mischarging by AlaRS. Acts via tRNA-based rather than protein-based catalysis; rejects L-amino acids rather than detecting D-amino acids in the active site. By recycling D-aminoacyl-tRNA to D-amino acids and free tRNA molecules, this enzyme counteracts the toxicity associated with the formation of D-aminoacyl-tRNA entities in vivo and helps enforce protein L-homochirality. The polypeptide is D-aminoacyl-tRNA deacylase (Oenococcus oeni (strain ATCC BAA-331 / PSU-1)).